Consider the following 117-residue polypeptide: Immunoglobulin kappa variable 1-27 (117 aa).

An N-terminal signal peptide occupies residues 1 to 22 (MDMRVPAQLLGLLLLWLPDTRC). The segment at 23–45 (DIQMTQSPSSLSASVGDRVTITC) is framework-1. The 95-residue stretch at 23–117 (DIQMTQSPSS…YYCQKYNSAP (95 aa)) folds into the Ig-like domain. Cysteines 45 and 110 form a disulfide. Residues 46 to 56 (RASQGISNYLA) form a complementarity-determining-1 region. The segment at 57-71 (WYQQKPGKVPKLLIY) is framework-2. The interval 72 to 78 (AASTLQS) is complementarity-determining-2. The segment at 79–110 (GVPSRFSGSGSGTDFTLTISSLQPEDVATYYC) is framework-3. The tract at residues 111–117 (QKYNSAP) is complementarity-determining-3.

As to quaternary structure, immunoglobulins are composed of two identical heavy chains and two identical light chains; disulfide-linked.

The protein localises to the secreted. The protein resides in the cell membrane. V region of the variable domain of immunoglobulin light chains that participates in the antigen recognition. Immunoglobulins, also known as antibodies, are membrane-bound or secreted glycoproteins produced by B lymphocytes. In the recognition phase of humoral immunity, the membrane-bound immunoglobulins serve as receptors which, upon binding of a specific antigen, trigger the clonal expansion and differentiation of B lymphocytes into immunoglobulins-secreting plasma cells. Secreted immunoglobulins mediate the effector phase of humoral immunity, which results in the elimination of bound antigens. The antigen binding site is formed by the variable domain of one heavy chain, together with that of its associated light chain. Thus, each immunoglobulin has two antigen binding sites with remarkable affinity for a particular antigen. The variable domains are assembled by a process called V-(D)-J rearrangement and can then be subjected to somatic hypermutations which, after exposure to antigen and selection, allow affinity maturation for a particular antigen. This Homo sapiens (Human) protein is Immunoglobulin kappa variable 1-27.